Reading from the N-terminus, the 652-residue chain is Carboxypeptidase S1 homolog A (652 aa).

The N-terminal stretch at 1–19 (MRLAASIAVALPVIGAASA) is a signal peptide. Cys50 and Cys121 are disulfide-bonded. N-linked (GlcNAc...) asparagine glycosylation is found at Asn77, Asn132, Asn161, Asn168, Asn184, and Asn202. Residue Ser238 is part of the active site. N-linked (GlcNAc...) asparagine glycosylation is found at Asn260, Asn299, Asn347, and Asn410. Intrachain disulfides connect Cys325-Cys361 and Cys332-Cys354. The active site involves Asp458. Cys461 lines the substrate pocket. 3 N-linked (GlcNAc...) asparagine glycosylation sites follow: Asn474, Asn492, and Asn505. His516 is a catalytic residue. Glu517 is a substrate binding site. An N-linked (GlcNAc...) asparagine glycan is attached at Asn594. Positions 608-628 (AASKGNPPPTTTSSPTASPTA) are disordered. The segment covering 618 to 628 (TTSSPTASPTA) has biased composition (low complexity). Gly629 carries GPI-anchor amidated glycine lipidation. The propeptide at 630–652 (SAMLKAPVAMLAISALTVLAFYL) is removed in mature form.

Belongs to the peptidase S10 family.

The protein resides in the cell membrane. It catalyses the reaction Preferential release of a C-terminal arginine or lysine residue.. Its function is as follows. Extracellular serine carboxypeptidase that contributes to pathogenicity. This Trichophyton verrucosum (strain HKI 0517) protein is Carboxypeptidase S1 homolog A (SCPA).